The primary structure comprises 139 residues: Large ribosomal subunit protein uL16 (139 aa).

Belongs to the universal ribosomal protein uL16 family. Part of the 50S ribosomal subunit.

Binds 23S rRNA and is also seen to make contacts with the A and possibly P site tRNAs. This is Large ribosomal subunit protein uL16 from Chlorobium phaeobacteroides (strain BS1).